The chain runs to 155 residues: SsrA-binding protein (155 aa).

The tract at residues 136 to 155 is disordered; that stretch reads RESLKRRQDQRDMQRAMKNY.

This sequence belongs to the SmpB family.

It localises to the cytoplasm. Its function is as follows. Required for rescue of stalled ribosomes mediated by trans-translation. Binds to transfer-messenger RNA (tmRNA), required for stable association of tmRNA with ribosomes. tmRNA and SmpB together mimic tRNA shape, replacing the anticodon stem-loop with SmpB. tmRNA is encoded by the ssrA gene; the 2 termini fold to resemble tRNA(Ala) and it encodes a 'tag peptide', a short internal open reading frame. During trans-translation Ala-aminoacylated tmRNA acts like a tRNA, entering the A-site of stalled ribosomes, displacing the stalled mRNA. The ribosome then switches to translate the ORF on the tmRNA; the nascent peptide is terminated with the 'tag peptide' encoded by the tmRNA and targeted for degradation. The ribosome is freed to recommence translation, which seems to be the essential function of trans-translation. The sequence is that of SsrA-binding protein from Nostoc sp. (strain PCC 7120 / SAG 25.82 / UTEX 2576).